We begin with the raw amino-acid sequence, 356 residues long: Heat-inducible transcription repressor HrcA (356 aa).

This sequence belongs to the HrcA family.

Its function is as follows. Negative regulator of class I heat shock genes (grpE-dnaK-dnaJ and groELS operons). Prevents heat-shock induction of these operons. The polypeptide is Heat-inducible transcription repressor HrcA (Brucella abortus (strain S19)).